Reading from the N-terminus, the 137-residue chain is Small ribosomal subunit protein uS9c (137 aa).

It belongs to the universal ribosomal protein uS9 family.

It localises to the plastid. The protein localises to the chloroplast. This is Small ribosomal subunit protein uS9c (rps9) from Chlorella vulgaris (Green alga).